Consider the following 787-residue polypeptide: Probable phosphoketolase (787 aa).

Belongs to the XFP family. Thiamine diphosphate serves as cofactor.

The polypeptide is Probable phosphoketolase (Pediococcus pentosaceus (strain ATCC 25745 / CCUG 21536 / LMG 10740 / 183-1w)).